Here is a 1213-residue protein sequence, read N- to C-terminus: Filamin-A-interacting protein 1 (1213 aa).

The interval 1–70 (MRSRNQGGES…TSGECERKTK (70 aa)) is disordered. The segment covering 61 to 70 (TSGECERKTK) has biased composition (basic and acidic residues). Residue Ser138 is modified to Phosphoserine. Coiled-coil stretches lie at residues 192–591 (DYMN…ELSC) and 624–781 (PEDN…LSKR). Disordered regions lie at residues 878-900 (NGPS…PGEV) and 949-976 (KPRI…GPER). 2 stretches are compositionally biased toward polar residues: residues 880 to 894 (PSIT…NSSP) and 960 to 970 (VMPQKQKSGDT). Ser979 bears the Phosphoserine mark. Residues 1103–1213 (VSTGTVLRSP…STTSLGGGKG (111 aa)) are disordered. Low complexity predominate over residues 1125 to 1138 (VTSTITITPVTTSS). A compositionally biased stretch (polar residues) spans 1139-1156 (ARGTQSVSGQDGSSQRPT). A compositionally biased stretch (low complexity) spans 1168–1179 (AGKPVVAAPGAG).

Belongs to the FILIP1 family. As to quaternary structure, interacts with FLNA. Interacts with RHOD (in GTP-bound form). In terms of tissue distribution, moderately expressed in adult heart and brain. Weakly expressed in lung, skeletal muscle, ovary, testis, kidney, and fetal brain, and hardly detectable in liver, pancreas, spleen, and fetal liver. Within brain, moderate expression is found in amygdala and caudate nucleus. Expressed in skin fibroblasts.

The protein resides in the cytoplasm. The protein localises to the cytoskeleton. Its function is as follows. By acting through a filamin-A/F-actin axis, it controls the start of neocortical cell migration from the ventricular zone. May be able to induce the degradation of filamin-A. The protein is Filamin-A-interacting protein 1 (FILIP1) of Homo sapiens (Human).